Consider the following 317-residue polypeptide: Probable methyltransferase tdiE (317 aa).

Belongs to the methyltransferase superfamily. LaeA methyltransferase family.

It functions in the pathway secondary metabolite biosynthesis. Probable methyltransferase; part of the gene cluster that mediates the biosynthesis of terrequinone A, an antitumor agent. The first step in the biosynthetic pathway for terrequinone A is formation of indole pyruvic acid (IPA) from L-tryptophan by the aminotransferase tdiD. The nonribosomal peptide synthase tdiA then immediately converts unstable IPA to didemethylasterriquinone D (DDAQ D), via condensation of 2 IPA molecules. The symmetric connectivity of the 2 IPA molecules is thought to arise by head-to-tail dual Claisen condensations facilitated by the TE domain. TdiB then catalyzes reverse prenylation by transferring dimethylallyl diphosphate to carbon atom 2' of DDAQ D, to yield asterriquinone C-1. Finally, tdiC and tdiE enzymes robustly convert asterriquinone C-1 to terrequinone A via a transformation involving regular prenylation at carbon atom 5, which requires elimination of the hydroxy group on C-5. The protein is Probable methyltransferase tdiE of Emericella nidulans (strain FGSC A4 / ATCC 38163 / CBS 112.46 / NRRL 194 / M139) (Aspergillus nidulans).